Consider the following 440-residue polypeptide: Deoxyguanosinetriphosphate triphosphohydrolase-like protein (440 aa).

The HD domain occupies 62–255 (RLTHSLEAAQ…MELADDIAYG (194 aa)).

The protein belongs to the dGTPase family. Type 2 subfamily.

This chain is Deoxyguanosinetriphosphate triphosphohydrolase-like protein, found in Vibrio parahaemolyticus serotype O3:K6 (strain RIMD 2210633).